The following is a 435-amino-acid chain: Glutamine synthetase (435 aa).

The GS beta-grasp domain occupies Lys12–Arg94. The GS catalytic domain occupies Pro100 to Ile435. Mg(2+)-binding residues include Glu123, Glu125, Glu180, and Glu187. Residue Gly232 coordinates L-glutamate. Residue His236 participates in Mg(2+) binding. Ser240 lines the ATP pocket. The L-glutamate site is built by Arg291 and Arg315. The ATP site is built by Arg315 and Arg320. Residue Glu328 participates in Mg(2+) binding. Arg330 is an L-glutamate binding site.

The protein belongs to the glutamine synthetase family. In terms of assembly, homooctamer. Mg(2+) serves as cofactor.

It carries out the reaction L-glutamate + NH4(+) + ATP = L-glutamine + ADP + phosphate + H(+). In terms of biological role, catalyzes the ATP-dependent biosynthesis of glutamine from glutamate and ammonia. The chain is Glutamine synthetase from Rhizobium leguminosarum bv. phaseoli.